A 334-amino-acid chain; its full sequence is Nucleoid-associated protein PMI0825 (334 aa).

It belongs to the YejK family.

The protein localises to the cytoplasm. Its subcellular location is the nucleoid. In Proteus mirabilis (strain HI4320), this protein is Nucleoid-associated protein PMI0825.